The chain runs to 521 residues: 3,4-dihydroxyphenylacetaldehyde synthase (521 aa).

At K306 the chain carries N6-(pyridoxal phosphate)lysine.

It belongs to the group II decarboxylase family. Pyridoxal 5'-phosphate is required as a cofactor. Highly expressed in the cuticle and midgut. Low expression in the head and thorax.

It carries out the reaction L-dopa + O2 + H2O + H(+) = 3,4-dihydroxyphenylacetaldehyde + H2O2 + NH4(+) + CO2. In terms of biological role, catalyzes the decarboxylation-oxidative deamination of L-3,4-dihydroxyphenylalanine (L-DOPA) to 3,4-dihydroxylphenylacetaldehyde (DHPAA). Involved in cuticle development. Probably responsible for the protein cross-linking during the development of flexible cuticles. The chain is 3,4-dihydroxyphenylacetaldehyde synthase from Aedes aegypti (Yellowfever mosquito).